Consider the following 263-residue polypeptide: MRILLTNDDGIHAPGLQALEKIARALSDDVWICAPEYEQSGASRALTLADPIRVRKLDSRRFAVEGTPTDCVMMAVQHLIEGGRPDLVLSGVNRGQNIAEDVTLSGTVAGAIEGMAMGIPSIALSQSMNYFHDEIVAHWETAEAFAPGIIQRLLEVGWPADVVMNVNFPALPPESVKAVEVTRQGFRDGHMRHMDKRTDLRGRDYYWMGFTAKASQPAEGTDLRAVYEGRISVTPLHIDLTHNETVHTLKGVLGGAPPRKVGA.

4 residues coordinate a divalent metal cation: Asp-8, Asp-9, Ser-40, and Asn-93.

This sequence belongs to the SurE nucleotidase family. The cofactor is a divalent metal cation.

Its subcellular location is the cytoplasm. The enzyme catalyses a ribonucleoside 5'-phosphate + H2O = a ribonucleoside + phosphate. Its function is as follows. Nucleotidase that shows phosphatase activity on nucleoside 5'-monophosphates. The polypeptide is 5'-nucleotidase SurE (Caulobacter vibrioides (strain ATCC 19089 / CIP 103742 / CB 15) (Caulobacter crescentus)).